Here is a 459-residue protein sequence, read N- to C-terminus: Trigger factor (459 aa).

One can recognise a PPIase FKBP-type domain in the interval 161 to 246 (GDKVVIDFQG…IKKIMEGKLP (86 aa)).

Belongs to the FKBP-type PPIase family. Tig subfamily.

The protein localises to the cytoplasm. The catalysed reaction is [protein]-peptidylproline (omega=180) = [protein]-peptidylproline (omega=0). Involved in protein export. Acts as a chaperone by maintaining the newly synthesized protein in an open conformation. Functions as a peptidyl-prolyl cis-trans isomerase. This chain is Trigger factor, found in Legionella pneumophila (strain Corby).